Reading from the N-terminus, the 509-residue chain is Diacylglycerol kinase 5 (509 aa).

The DAGKc domain occupies 36–187 (TPASPVLVFI…IDNWHILMRM (152 aa)). Residues 439–452 (RSVFDPSTPRHQDG) show a composition bias toward basic and acidic residues. Residues 439-509 (RSVFDPSTPR…SNVHGWSHVL (71 aa)) are disordered. Over residues 453–467 (AEDYDDNEDDSVAEG) the composition is skewed to acidic residues. The segment covering 468–489 (EEFRKFGAADTFKIPDEGEHSN) has biased composition (basic and acidic residues). Residues 490–500 (KKGRASRRRNS) are compositionally biased toward basic residues.

It belongs to the eukaryotic diacylglycerol kinase family. Monomer.

The catalysed reaction is a 1,2-diacyl-sn-glycerol + ATP = a 1,2-diacyl-sn-glycero-3-phosphate + ADP + H(+). In terms of biological role, phosphorylates the second messenger diacylglycerol (DAG) to generate phosphatidic acid (PA), another important signaling molecule. PA is required for plant development and responses to abiotic stress and pathogen attack. May be involved in the accumulation of PA during cold stress. This is Diacylglycerol kinase 5 (DGK5) from Arabidopsis thaliana (Mouse-ear cress).